We begin with the raw amino-acid sequence, 152 residues long: SsrA-binding protein (152 aa).

Belongs to the SmpB family.

It localises to the cytoplasm. Its function is as follows. Required for rescue of stalled ribosomes mediated by trans-translation. Binds to transfer-messenger RNA (tmRNA), required for stable association of tmRNA with ribosomes. tmRNA and SmpB together mimic tRNA shape, replacing the anticodon stem-loop with SmpB. tmRNA is encoded by the ssrA gene; the 2 termini fold to resemble tRNA(Ala) and it encodes a 'tag peptide', a short internal open reading frame. During trans-translation Ala-aminoacylated tmRNA acts like a tRNA, entering the A-site of stalled ribosomes, displacing the stalled mRNA. The ribosome then switches to translate the ORF on the tmRNA; the nascent peptide is terminated with the 'tag peptide' encoded by the tmRNA and targeted for degradation. The ribosome is freed to recommence translation, which seems to be the essential function of trans-translation. The polypeptide is SsrA-binding protein (Rickettsia prowazekii (strain Madrid E)).